The following is a 1056-amino-acid chain: Carbamoyl phosphate synthase large chain (1056 aa).

The tract at residues 1–397 (MPKKSHIKKV…AFKKALRSLD (397 aa)) is carboxyphosphate synthetic domain. ATP is bound by residues Arg-127, Arg-167, Gly-173, Gly-174, Glu-206, Val-208, Glu-213, Gly-239, Ile-240, His-241, Gln-282, and Glu-294. Residues 131-323 (RDLMNAIGEP…IARVAAKIAI (193 aa)) form the ATP-grasp 1 domain. Mg(2+)-binding residues include Gln-282, Glu-294, and Asn-296. 3 residues coordinate Mn(2+): Gln-282, Glu-294, and Asn-296. Residues 398–530 (NDMQQHTNPS…YSTWEEGCEL (133 aa)) form an oligomerization domain region. Residues 531–920 (VRDSAKKVLI…YKACTAADNT (390 aa)) are carbamoyl phosphate synthetic domain. The 192-residue stretch at 662–853 (SRLLTRLEIP…LAKIAAKVMV (192 aa)) folds into the ATP-grasp 2 domain. ATP contacts are provided by Arg-698, Ser-737, Leu-739, Glu-744, Gly-769, Val-770, His-771, Ser-772, Gln-812, and Glu-824. Mg(2+) contacts are provided by Gln-812, Glu-824, and Asn-826. 3 residues coordinate Mn(2+): Gln-812, Glu-824, and Asn-826. An MGS-like domain is found at 919-1056 (NTLPTTGNVF…EPLGHYHGLM (138 aa)). Residues 921-1056 (LPTTGNVFIS…EPLGHYHGLM (136 aa)) are allosteric domain.

Belongs to the CarB family. As to quaternary structure, composed of two chains; the small (or glutamine) chain promotes the hydrolysis of glutamine to ammonia, which is used by the large (or ammonia) chain to synthesize carbamoyl phosphate. Tetramer of heterodimers (alpha,beta)4. Requires Mg(2+) as cofactor. It depends on Mn(2+) as a cofactor.

It carries out the reaction hydrogencarbonate + L-glutamine + 2 ATP + H2O = carbamoyl phosphate + L-glutamate + 2 ADP + phosphate + 2 H(+). The enzyme catalyses hydrogencarbonate + NH4(+) + 2 ATP = carbamoyl phosphate + 2 ADP + phosphate + 2 H(+). It participates in amino-acid biosynthesis; L-arginine biosynthesis; carbamoyl phosphate from bicarbonate: step 1/1. It functions in the pathway pyrimidine metabolism; UMP biosynthesis via de novo pathway; (S)-dihydroorotate from bicarbonate: step 1/3. Functionally, large subunit of the glutamine-dependent carbamoyl phosphate synthetase (CPSase). CPSase catalyzes the formation of carbamoyl phosphate from the ammonia moiety of glutamine, carbonate, and phosphate donated by ATP, constituting the first step of 2 biosynthetic pathways, one leading to arginine and/or urea and the other to pyrimidine nucleotides. The large subunit (synthetase) binds the substrates ammonia (free or transferred from glutamine from the small subunit), hydrogencarbonate and ATP and carries out an ATP-coupled ligase reaction, activating hydrogencarbonate by forming carboxy phosphate which reacts with ammonia to form carbamoyl phosphate. The polypeptide is Carbamoyl phosphate synthase large chain (Methanoculleus marisnigri (strain ATCC 35101 / DSM 1498 / JR1)).